The chain runs to 161 residues: Nucleotide-binding protein Rfer_2692 (161 aa).

Belongs to the YajQ family.

Nucleotide-binding protein. The sequence is that of Nucleotide-binding protein Rfer_2692 from Albidiferax ferrireducens (strain ATCC BAA-621 / DSM 15236 / T118) (Rhodoferax ferrireducens).